The chain runs to 104 residues: L-rhamnose mutarotase (104 aa).

Position 18 (Y18) interacts with substrate. Residue H22 is the Proton donor of the active site. Substrate is bound by residues Y41 and 76–77 (WW).

It belongs to the rhamnose mutarotase family. Homodimer.

It is found in the cytoplasm. It catalyses the reaction alpha-L-rhamnose = beta-L-rhamnose. It participates in carbohydrate metabolism; L-rhamnose metabolism. Its function is as follows. Involved in the anomeric conversion of L-rhamnose. The polypeptide is L-rhamnose mutarotase (Jannaschia sp. (strain CCS1)).